The chain runs to 206 residues: High frequency lysogenization protein HflD homolog (206 aa).

This sequence belongs to the HflD family.

It is found in the cytoplasm. The protein resides in the cell inner membrane. The protein is High frequency lysogenization protein HflD homolog of Pseudomonas aeruginosa (strain LESB58).